We begin with the raw amino-acid sequence, 150 residues long: Protein SprT-like (150 aa).

The SprT-like domain maps to 11–149 (ELVDKLSLTY…CGKCRGSLKE (139 aa)). Histidine 70 serves as a coordination point for Zn(2+). The active site involves glutamate 71. Histidine 74 serves as a coordination point for Zn(2+).

Belongs to the SprT family. It depends on Zn(2+) as a cofactor.

It localises to the cytoplasm. This is Protein SprT-like from Oceanobacillus iheyensis (strain DSM 14371 / CIP 107618 / JCM 11309 / KCTC 3954 / HTE831).